Here is an 87-residue protein sequence, read N- to C-terminus: Cell division topological specificity factor (87 aa).

This sequence belongs to the MinE family.

In terms of biological role, prevents the cell division inhibition by proteins MinC and MinD at internal division sites while permitting inhibition at polar sites. This ensures cell division at the proper site by restricting the formation of a division septum at the midpoint of the long axis of the cell. The polypeptide is Cell division topological specificity factor (Rhizobium meliloti (strain 1021) (Ensifer meliloti)).